A 54-amino-acid polypeptide reads, in one-letter code: ATP synthase protein 8 (54 aa).

The helical transmembrane segment at 13–32 threads the bilayer; the sequence is ITFTFVIITLMVYILSKYIL.

This sequence belongs to the ATPase protein 8 family. F-type ATPases have 2 components, CF(1) - the catalytic core - and CF(0) - the membrane proton channel.

The protein resides in the mitochondrion membrane. Mitochondrial membrane ATP synthase (F(1)F(0) ATP synthase or Complex V) produces ATP from ADP in the presence of a proton gradient across the membrane which is generated by electron transport complexes of the respiratory chain. F-type ATPases consist of two structural domains, F(1) - containing the extramembraneous catalytic core and F(0) - containing the membrane proton channel, linked together by a central stalk and a peripheral stalk. During catalysis, ATP synthesis in the catalytic domain of F(1) is coupled via a rotary mechanism of the central stalk subunits to proton translocation. Part of the complex F(0) domain. Minor subunit located with subunit a in the membrane. This is ATP synthase protein 8 (atp-8) from Neurospora crassa (strain ATCC 24698 / 74-OR23-1A / CBS 708.71 / DSM 1257 / FGSC 987).